The following is a 1342-amino-acid chain: Putative aldehyde oxidase-like protein (1342 aa).

The disordered stretch occupies residues 1-23; sequence MSDCNSGGGERRPNARATDAPPV. In terms of domain architecture, FAD-binding PCMH-type spans 221-408; sequence ISSPREGWYC…LSIFIPHWAS (188 aa).

It belongs to the xanthine dehydrogenase family.

This Oryza sativa subsp. japonica (Rice) protein is Putative aldehyde oxidase-like protein.